We begin with the raw amino-acid sequence, 106 residues long: Protein translation factor SUI1 homolog (106 aa).

The protein belongs to the SUI1 family.

Additional factor that functions in concert with eIF-2 and the initiator tRNA in directing the ribosome to the proper start site of translation. The sequence is that of Protein translation factor SUI1 homolog from Acanthamoeba polyphaga mimivirus (APMV).